Here is a 270-residue protein sequence, read N- to C-terminus: MPELPEVEVVRRGLETILKDQPILEKVELMRKDLREPIPAKKISTLVGQPLTSIERRAKYLLLWTPKGAMLSHLGMTGTWRVAVPGDERLHDHIYLHFSGDLRLAYRDPRRFGCFDFVQDPLKHPKLADLGPEPLEAEFNGPLLWEKLRGKDVALKVALMDQKVVVGVGNIYASEALFAAGIKPTLPARKLSLERASLLVGEIKKILSQSIKAGGSSISDFAQASGESGYFQTSFRVYGRDKEPCVTCGQQVKSKVLGGRNTFWCSRCQK.

Residue P2 is the Schiff-base intermediate with DNA of the active site. Residue E3 is the Proton donor of the active site. The Proton donor; for beta-elimination activity role is filled by K59. Residues H91, R110, and K151 each coordinate DNA. Residues 236–270 (RVYGRDKEPCVTCGQQVKSKVLGGRNTFWCSRCQK) form an FPG-type zinc finger. R260 serves as the catalytic Proton donor; for delta-elimination activity.

Belongs to the FPG family. In terms of assembly, monomer. Zn(2+) is required as a cofactor.

The enzyme catalyses Hydrolysis of DNA containing ring-opened 7-methylguanine residues, releasing 2,6-diamino-4-hydroxy-5-(N-methyl)formamidopyrimidine.. It catalyses the reaction 2'-deoxyribonucleotide-(2'-deoxyribose 5'-phosphate)-2'-deoxyribonucleotide-DNA = a 3'-end 2'-deoxyribonucleotide-(2,3-dehydro-2,3-deoxyribose 5'-phosphate)-DNA + a 5'-end 5'-phospho-2'-deoxyribonucleoside-DNA + H(+). Functionally, involved in base excision repair of DNA damaged by oxidation or by mutagenic agents. Acts as a DNA glycosylase that recognizes and removes damaged bases. Has a preference for oxidized purines, such as 7,8-dihydro-8-oxoguanine (8-oxoG). Has AP (apurinic/apyrimidinic) lyase activity and introduces nicks in the DNA strand. Cleaves the DNA backbone by beta-delta elimination to generate a single-strand break at the site of the removed base with both 3'- and 5'-phosphates. The protein is Formamidopyrimidine-DNA glycosylase of Bdellovibrio bacteriovorus (strain ATCC 15356 / DSM 50701 / NCIMB 9529 / HD100).